The sequence spans 100 residues: NAD(P)H-quinone oxidoreductase subunit 4L, chloroplastic (100 aa).

3 helical membrane-spanning segments follow: residues 1-21, 31-51, and 63-83; these read MLEHALILGAYLFSIGIYGLV, MCLELILNAVNLNLVTFSNFF, and IFVIAIAAAEAAIGLAIVLAI.

The protein belongs to the complex I subunit 4L family. In terms of assembly, NDH is composed of at least 16 different subunits, 5 of which are encoded in the nucleus.

It is found in the plastid. The protein resides in the chloroplast thylakoid membrane. The enzyme catalyses a plastoquinone + NADH + (n+1) H(+)(in) = a plastoquinol + NAD(+) + n H(+)(out). The catalysed reaction is a plastoquinone + NADPH + (n+1) H(+)(in) = a plastoquinol + NADP(+) + n H(+)(out). NDH shuttles electrons from NAD(P)H:plastoquinone, via FMN and iron-sulfur (Fe-S) centers, to quinones in the photosynthetic chain and possibly in a chloroplast respiratory chain. The immediate electron acceptor for the enzyme in this species is believed to be plastoquinone. Couples the redox reaction to proton translocation, and thus conserves the redox energy in a proton gradient. The protein is NAD(P)H-quinone oxidoreductase subunit 4L, chloroplastic of Cryptomeria japonica (Japanese cedar).